Consider the following 86-residue polypeptide: Large ribosomal subunit protein bL31B (86 aa).

The protein belongs to the bacterial ribosomal protein bL31 family. Type B subfamily. Part of the 50S ribosomal subunit.

This is Large ribosomal subunit protein bL31B from Vibrio parahaemolyticus serotype O3:K6 (strain RIMD 2210633).